We begin with the raw amino-acid sequence, 723 residues long: 1,3-alpha-isomaltosidase (723 aa).

The active-site Nucleophile is the aspartate 451. Glutamate 454 is an active-site residue. The active-site Proton donor is the aspartate 516. Residue histidine 581 coordinates substrate.

This sequence belongs to the glycosyl hydrolase 31 family.

The protein localises to the cytoplasm. The enzyme catalyses cyclobis-(1-&gt;3)-alpha-D-isomaltosyl + 2 H2O = 2 isomaltose. Functionally, involved in the intracellular degradation of the cyclic tetrasaccharide cyclobis-(1-6)-alpha-nigerosyl (CNN) formed extracellularly from starch. Catalyzes the hydrolysis of the alpha-1,3-glucosidic linkage of cyclobis-(1-6)-alpha-nigerosyl (CNN) to yield isomaltose via a possible linear tetrasaccharide. It has a strong preference for the alpha-(1-3)-isomaltosyl moiety. This Kribbella flavida (strain DSM 17836 / JCM 10339 / NBRC 14399) protein is 1,3-alpha-isomaltosidase.